The sequence spans 642 residues: Threonine--tRNA ligase (642 aa).

The 61-residue stretch at 1–61 (MPVITLPDGS…ENDTQLSIIT (61 aa)) folds into the TGS domain. Residues 243-534 (DHRKIGKQLD…LTEEFAGFFP (292 aa)) form a catalytic region. An N6-acetyllysine modification is found at Lys-286. Positions 334, 385, and 511 each coordinate Zn(2+).

This sequence belongs to the class-II aminoacyl-tRNA synthetase family. As to quaternary structure, homodimer. Zn(2+) is required as a cofactor.

The protein resides in the cytoplasm. It carries out the reaction tRNA(Thr) + L-threonine + ATP = L-threonyl-tRNA(Thr) + AMP + diphosphate + H(+). Functionally, catalyzes the attachment of threonine to tRNA(Thr) in a two-step reaction: L-threonine is first activated by ATP to form Thr-AMP and then transferred to the acceptor end of tRNA(Thr). Also edits incorrectly charged L-seryl-tRNA(Thr). This is Threonine--tRNA ligase from Shigella dysenteriae serotype 1 (strain Sd197).